A 931-amino-acid chain; its full sequence is Kinesin heavy chain (931 aa).

The Kinesin motor domain maps to 6–329 (SIKVVARFRP…LRFGMRAKSI (324 aa)). ATP-binding positions include 87 to 94 (GQTGAGKS) and 237 to 244 (GSEKVGKT). Residues 342–864 (AELKSLLKKA…VKERLELAKA (523 aa)) are a coiled coil. 2 disordered regions span residues 388–465 (TTDA…EKQL) and 886–931 (AKPL…FTKS). Over residues 402–419 (STRPSTPSLISDSRSETP) the composition is skewed to polar residues. Positions 432–456 (LDKDEREEFLRRENELQDQISEKES) are enriched in basic and acidic residues. The span at 902-931 (PTIQNLQGQNEGNTSSGSSSKRASWFFTKS) shows a compositional bias: polar residues.

This sequence belongs to the TRAFAC class myosin-kinesin ATPase superfamily. Kinesin family. Kinesin subfamily.

The protein localises to the cytoplasm. The protein resides in the cytoskeleton. Kinesin is a microtubule-associated force-producing protein that may play a role in organelle transport. Its motor activity is directed toward the microtubule's plus end. In Gibberella moniliformis (Maize ear and stalk rot fungus), this protein is Kinesin heavy chain (KLP1).